Reading from the N-terminus, the 426-residue chain is MRRTVLLVTVLLVFIGGCLGQMENPRPTNNPSTSHPSDSYSTLPTTKYDVLKEGQEKPVVNAINSFTFDLYKELAGNNNNVFFSPFSIETALAMAYEGARGKTAEEMKRVLHLPEDDDARWTGFRYLLLSLKSPEGSPFILRSVNALWVQRGYSLREEYLGIVKEFYLGEAKEVDFQGNPAEAAREINEWVEEQTNGRIKDIVSGLSPLTRLVITNAVYFKANWSSRFRASDTRNETFHAPNGTVIVPMMHQTGEFPYFENDDLQALELPYEGERLGMLIILPKEGKFEKVEGNLSAGSIENILKNMREEKVKVALPKFRFEASYKLRDVLMDMGMKRAFLVPDFSGISNGENLAIEDVVHKSFISVAENGTEAAAATAVTLTMNAPMQEKEPKIFKADHPFIFFIYDRETGTILFMGRMMNPKDG.

The disordered stretch occupies residues 23–42 (ENPRPTNNPSTSHPSDSYST). Residues 26–42 (RPTNNPSTSHPSDSYST) show a composition bias toward polar residues.

The protein belongs to the serpin family.

This is an uncharacterized protein from Thermococcus kodakarensis (strain ATCC BAA-918 / JCM 12380 / KOD1) (Pyrococcus kodakaraensis (strain KOD1)).